Reading from the N-terminus, the 275-residue chain is Putative carbamate hydrolase RutD (275 aa).

It belongs to the AB hydrolase superfamily. Hydrolase RutD family.

The catalysed reaction is carbamate + 2 H(+) = NH4(+) + CO2. In terms of biological role, involved in pyrimidine catabolism. May facilitate the hydrolysis of carbamate, a reaction that can also occur spontaneously. The sequence is that of Putative carbamate hydrolase RutD from Escherichia coli O6:H1 (strain CFT073 / ATCC 700928 / UPEC).